Here is a 368-residue protein sequence, read N- to C-terminus: Peptide chain release factor 2 (368 aa).

N5-methylglutamine is present on Q245.

The protein belongs to the prokaryotic/mitochondrial release factor family. Methylated by PrmC. Methylation increases the termination efficiency of RF2.

The protein resides in the cytoplasm. In terms of biological role, peptide chain release factor 2 directs the termination of translation in response to the peptide chain termination codons UGA and UAA. The protein is Peptide chain release factor 2 (prfB) of Treponema pallidum (strain Nichols).